A 207-amino-acid chain; its full sequence is Superoxide dismutase [Mn] (207 aa).

Mn(2+) is bound by residues H28, H76, D160, and H164.

It belongs to the iron/manganese superoxide dismutase family. It depends on Mn(2+) as a cofactor.

The catalysed reaction is 2 superoxide + 2 H(+) = H2O2 + O2. Its function is as follows. Destroys superoxide anion radicals which are normally produced within the cells and which are toxic to biological systems. This Mycobacterium lepraemurium protein is Superoxide dismutase [Mn] (sodA).